The chain runs to 250 residues: Flavin-dependent thymidylate synthase (250 aa).

One can recognise a ThyX domain in the interval 7–233 (LRVQLIAKTE…PAVFADFEVT (227 aa)). DUMP is bound by residues 92 to 95 (ELIR), 103 to 107 (QLSQR), and Arg-172. FAD-binding positions include 95 to 97 (RHR) and Gln-103. The short motif at 95 to 105 (RHRHFSYSQLS) is the ThyX motif element. FAD is bound by residues 188–190 (NYR) and His-194. Arg-199 lines the dUMP pocket. Arg-199 functions as the Involved in ionization of N3 of dUMP, leading to its activation in the catalytic mechanism.

Belongs to the thymidylate synthase ThyX family. Homotetramer. FAD is required as a cofactor.

It catalyses the reaction dUMP + (6R)-5,10-methylene-5,6,7,8-tetrahydrofolate + NADPH + H(+) = dTMP + (6S)-5,6,7,8-tetrahydrofolate + NADP(+). Its pathway is pyrimidine metabolism; dTTP biosynthesis. Catalyzes the reductive methylation of 2'-deoxyuridine-5'-monophosphate (dUMP) to 2'-deoxythymidine-5'-monophosphate (dTMP) while utilizing 5,10-methylenetetrahydrofolate (mTHF) as the methyl donor, and NADPH and FADH(2) as the reductant. The sequence is that of Flavin-dependent thymidylate synthase from Mycobacterium marinum (strain ATCC BAA-535 / M).